Here is a 249-residue protein sequence, read N- to C-terminus: MKLNISFPATGCQKLIEVEDERKLRTFYEKRMATEVAADPLGDEWKGYVVRISGGNDKQGFPMKQGVLTHGRVRLLLSKGHSCYRPRRTGERKRKSVRGCIVDANLSVLNLVIVRKGEKDIPGLTDNTVPRRLGPKRASRIRKLFNLSKEDDVRQYVVRKPLAKEGKKPRTKAPKIQRLVTPRVLQHKRRRIALKKQRTQKNKEEASEYAKLLAKRSKEAKEKRQEQIAKRRRLSSLRASTSKSESSQK.

Disordered regions lie at residues 161 to 181 (PLAK…RLVT) and 194 to 249 (LKKQ…SSQK). The segment covering 216–229 (RSKEAKEKRQEQIA) has biased composition (basic and acidic residues). A phosphoserine mark is found at Ser235, Ser236, Ser240, Ser244, and Ser247. The segment covering 236–249 (SLRASTSKSESSQK) has biased composition (low complexity).

Belongs to the eukaryotic ribosomal protein eS6 family. Component of the small ribosomal subunit. Part of the small subunit (SSU) processome, composed of more than 70 proteins and the RNA chaperone small nucleolar RNA (snoRNA) U3. Ribosomal protein S6 is the major substrate of protein kinases in eukaryote ribosomes. The phosphorylation is stimulated by growth factors, tumor promoting agents, and mitogens. It is dephosphorylated at growth arrest.

It localises to the cytoplasm. The protein localises to the nucleus. The protein resides in the nucleolus. Functionally, component of the 40S small ribosomal subunit. Plays an important role in controlling cell growth and proliferation through the selective translation of particular classes of mRNA. Part of the small subunit (SSU) processome, first precursor of the small eukaryotic ribosomal subunit. During the assembly of the SSU processome in the nucleolus, many ribosome biogenesis factors, an RNA chaperone and ribosomal proteins associate with the nascent pre-rRNA and work in concert to generate RNA folding, modifications, rearrangements and cleavage as well as targeted degradation of pre-ribosomal RNA by the RNA exosome. The polypeptide is Small ribosomal subunit protein eS6 (rps6) (Xenopus laevis (African clawed frog)).